Reading from the N-terminus, the 173-residue chain is Probable glutathione peroxidase 5 (173 aa).

Gly-2 is lipidated: N-myristoyl glycine. Cys-46 is a catalytic residue.

The protein belongs to the glutathione peroxidase family. In terms of tissue distribution, ubiquitous.

The protein resides in the cell membrane. It catalyses the reaction 2 glutathione + H2O2 = glutathione disulfide + 2 H2O. Its function is as follows. May constitute a glutathione peroxidase-like protective system against oxidative stresses. The polypeptide is Probable glutathione peroxidase 5 (GPX5) (Arabidopsis thaliana (Mouse-ear cress)).